Here is a 160-residue protein sequence, read N- to C-terminus: Transcription elongation factor GreA (160 aa).

A coiled-coil region spans residues 11–38 (YDRLMKELERLKSERPAIIQAIKEAREE).

The protein belongs to the GreA/GreB family.

In terms of biological role, necessary for efficient RNA polymerase transcription elongation past template-encoded arresting sites. The arresting sites in DNA have the property of trapping a certain fraction of elongating RNA polymerases that pass through, resulting in locked ternary complexes. Cleavage of the nascent transcript by cleavage factors such as GreA or GreB allows the resumption of elongation from the new 3'terminus. GreA releases sequences of 2 to 3 nucleotides. The protein is Transcription elongation factor GreA of Nitratidesulfovibrio vulgaris (strain DSM 19637 / Miyazaki F) (Desulfovibrio vulgaris).